We begin with the raw amino-acid sequence, 563 residues long: Arginine--tRNA ligase (563 aa).

Positions 121 to 131 (PNIAKPFSIGH) match the 'HIGH' region motif.

The protein belongs to the class-I aminoacyl-tRNA synthetase family. In terms of assembly, monomer.

The protein resides in the cytoplasm. The enzyme catalyses tRNA(Arg) + L-arginine + ATP = L-arginyl-tRNA(Arg) + AMP + diphosphate. The chain is Arginine--tRNA ligase from Streptococcus pyogenes serotype M18 (strain MGAS8232).